Consider the following 813-residue polypeptide: Polycomb group protein FERTILIZATION-INDEPENDENT SEED 2 (813 aa).

The tract at residues 1–27 is disordered; that stretch reads MARKSIRGKEVVMVSDDDDDDDDVDDD. The span at 15 to 26 shows a compositional bias: acidic residues; the sequence is SDDDDDDDDVDD. The segment at 134–155 adopts a C2H2-type zinc-finger fold; that stretch reads CPFCLIPCGGHEGLQLHLKSSH. Disordered regions lie at residues 197 to 216, 232 to 261, and 274 to 648; these read SPLT…DDSN, DLPR…SEKI, and ESSE…RKEL. Over residues 232–246 the composition is skewed to basic and acidic residues; it reads DLPRGTENDSTHVND. An A-1 repeat occupies 243–264; that stretch reads HVNDDNVSSPPRAHSSEKISDI. The segment at 243–542 is 12 X approximate repeat A; sequence HVNDDNVSSP…HSSKKNKSTR (300 aa). A B-1 repeat occupies 265 to 281; that stretch reads LTTTQLAIAESSEPKVP. A 7 X approximate repeat B region spans residues 265 to 640; it reads LTTTQLAIAE…KAEPSEPKVT (376 aa). The A-2 repeat unit spans residues 282–304; the sequence is HVNDGNVSSPPRAHSSAEKNEST. 3 stretches are compositionally biased toward basic and acidic residues: residues 296–307, 319–331, and 344–353; these read SSAEKNESTHVN, HSLE…HVNE, and KKNESTHMND. The A-3 repeat unit spans residues 305-327; that stretch reads HVNDDDDVSSPPRAHSLEKNEST. Residues 328-349 form an A-4 repeat; the sequence is HVNEDNISSPPKAHSSKKNEST. An A-5 repeat occupies 350-371; that stretch reads HMNDEDVSFPPRTRSSKETSDI. A B-2 repeat occupies 372–388; the sequence is LTTTQPAIVEPSEPKVR. Residues 388 to 402 show a composition bias toward basic residues; that stretch reads RRGSRRKQLYAKRYK. The stretch at 403–419 is one B-3 repeat; it reads ARETQPAIAESSEPKVL. Basic and acidic residues-rich tracts occupy residues 414 to 423 and 453 to 462; these read SEPKVLHVND and SEPKVPHVND. An A-6 repeat occupies 420 to 441; the sequence is HVNDENVSSPPEAHSLEKASDI. The B-4 repeat unit spans residues 442-458; the sequence is LTTTQPAIAESSEPKVP. Residues 459–481 form an A-7 repeat; the sequence is HVNDENVSSTPRAHSSKKNKSTR. The span at 472-481 shows a compositional bias: basic residues; that stretch reads HSSKKNKSTR. Residues 482–502 form an A-8 repeat; sequence KNVDNVPSPPKTRSSKKTSDI. A compositionally biased stretch (polar residues) spans 501–512; sequence DILTTTQPTIAE. The B-5 repeat unit spans residues 503-519; that stretch reads LTTTQPTIAESSEPKVR. Basic and acidic residues predominate over residues 514-523; sequence SEPKVRHVND. The A-9 repeat unit spans residues 520–542; it reads HVNDDNVSSTPRAHSSKKNKSTR. Residues 543–563 form an A-10 repeat; that stretch reads KNDDNIPSPPKTRSSKKTSNI. The B-6 repeat unit spans residues 564–579; sequence LTRTQPAIAESEPKVP. Positions 574-586 are enriched in basic and acidic residues; sequence SEPKVPHVNDDKV. An A-11 repeat occupies 580–601; it reads HVNDDKVSSTPRAHSSKKNKST. A compositionally biased stretch (basic residues) spans 593 to 602; that stretch reads HSSKKNKSTH. Residues 602-623 form an A-12 repeat; sequence HKKDDNASLPPKTRSSKKTSDI. One copy of the B-7 repeat lies at 624–640; sequence LATTQPAKAEPSEPKVT. The segment at 648-783 is VEFS-box; sequence LHAERCEAKR…CAKTFHKCTT (136 aa).

Belongs to the VEFS (VRN2-EMF2-FIS2-SU(Z)12) family. As to quaternary structure, probably indirectly associated with FIE and/or MEA. In plants, PcG complexes are probably composed of a member of the EZ family (CLF or MEA), FIE, and a member of the VEFS family (FIS2, VRN2 or EMF2). In terms of tissue distribution, weakly expressed. Expressed in late siliques.

Its subcellular location is the nucleus. Its function is as follows. Polycomb group (PcG) protein. PcG proteins act by forming multiprotein complexes, which are required to maintain the transcriptionally repressive state of homeotic genes throughout development. PcG proteins are not required to initiate repression, but to maintain it during later stages of development. They probably act via the methylation of histones, rendering chromatin heritably changed in its expressibility. Required to prevent the proliferation of the central cell by repressing unknown target genes before fertilization. Regulates the anteroposterior organization of the endosperm. The polypeptide is Polycomb group protein FERTILIZATION-INDEPENDENT SEED 2 (Arabidopsis thaliana (Mouse-ear cress)).